Reading from the N-terminus, the 819-residue chain is Zinc finger protein with KRAB and SCAN domains 5 (819 aa).

An SCAN box domain is found at 51-132 (QRFKHFQYHE…AVIESIQREL (82 aa)). Residues K214, K246, and K302 each participate in a glycyl lysine isopeptide (Lys-Gly) (interchain with G-Cter in SUMO2) cross-link. A KRAB domain is found at 216–287 (EDVADVAVSF…HWVAAERTEK (72 aa)). Disordered regions lie at residues 236–263 (SQKS…KEGN) and 283–340 (ERTE…GERG). Over residues 240 to 249 (LGRDSRKEDC) the composition is skewed to basic and acidic residues. Basic and acidic residues predominate over residues 329–340 (VNRKQKSNGERG). 9 C2H2-type zinc fingers span residues 341–363 (HRCG…RRIH), 369–391 (FKCG…QRVH), 397–419 (YKCQ…HSVH), 425–447 (YGCN…LKRH), 540–562 (HQCN…RRIH), 568–590 (FRCE…HRVH), 596–618 (YACH…QSVH), 624–646 (FKCN…LRLH), and 652–674 (HQCH…QVLH). A Glycyl lysine isopeptide (Lys-Gly) (interchain with G-Cter in SUMO2) cross-link involves residue K700. 3 C2H2-type zinc fingers span residues 708–730 (YQCD…YRTH), 764–786 (HQCN…QRIH), and 792–814 (LQCK…LRSH). K776 is covalently cross-linked (Glycyl lysine isopeptide (Lys-Gly) (interchain with G-Cter in SUMO2)).

The protein belongs to the krueppel C2H2-type zinc-finger protein family. In terms of tissue distribution, testis specific.

It is found in the nucleus. Its function is as follows. May be involved in transcriptional regulation. The protein is Zinc finger protein with KRAB and SCAN domains 5 (Zkscan5) of Mus musculus (Mouse).